Reading from the N-terminus, the 261-residue chain is Phosphatidylglycerol--prolipoprotein diacylglyceryl transferase (261 aa).

Transmembrane regions (helical) follow at residues 17–37, 59–79, 94–114, and 121–141; these read FAIH…LLLG, LLFA…TLFY, IWEG…ALLW, and TSFF…LAFG. Arg142 contributes to the a 1,2-diacyl-sn-glycero-3-phospho-(1'-sn-glycerol) binding site. 2 consecutive transmembrane segments (helical) span residues 174–194 and 228–248; these read PSQI…LWIY and FLGL…PMII.

It belongs to the Lgt family.

The protein resides in the cell inner membrane. It carries out the reaction L-cysteinyl-[prolipoprotein] + a 1,2-diacyl-sn-glycero-3-phospho-(1'-sn-glycerol) = an S-1,2-diacyl-sn-glyceryl-L-cysteinyl-[prolipoprotein] + sn-glycerol 1-phosphate + H(+). It functions in the pathway protein modification; lipoprotein biosynthesis (diacylglyceryl transfer). Catalyzes the transfer of the diacylglyceryl group from phosphatidylglycerol to the sulfhydryl group of the N-terminal cysteine of a prolipoprotein, the first step in the formation of mature lipoproteins. The protein is Phosphatidylglycerol--prolipoprotein diacylglyceryl transferase of Polynucleobacter asymbioticus (strain DSM 18221 / CIP 109841 / QLW-P1DMWA-1) (Polynucleobacter necessarius subsp. asymbioticus).